The chain runs to 228 residues: UPF0758 protein CLD_1541 (228 aa).

Residues lysine 106–isoleucine 228 form the MPN domain. Positions 177, 179, and 190 each coordinate Zn(2+). The JAMM motif motif lies at histidine 177–aspartate 190.

This sequence belongs to the UPF0758 family.

This is UPF0758 protein CLD_1541 from Clostridium botulinum (strain Okra / Type B1).